A 229-amino-acid polypeptide reads, in one-letter code: Large ribosomal subunit protein bL19cy (229 aa).

The transit peptide at 1–70 directs the protein to the chloroplast; it reads MATSSHLLPQ…DSKKRKEFIA (70 aa).

This sequence belongs to the bacterial ribosomal protein bL19 family. In terms of assembly, part of the 50S ribosomal subunit.

It localises to the plastid. The protein localises to the chloroplast. In terms of biological role, located at the 30S-50S ribosomal subunit interface and binds directly to 23S ribosomal RNA. This is Large ribosomal subunit protein bL19cy from Arabidopsis thaliana (Mouse-ear cress).